The following is a 132-amino-acid chain: Small ribosomal subunit protein uS8 (132 aa).

This sequence belongs to the universal ribosomal protein uS8 family. As to quaternary structure, part of the 30S ribosomal subunit. Contacts proteins S5 and S12.

Functionally, one of the primary rRNA binding proteins, it binds directly to 16S rRNA central domain where it helps coordinate assembly of the platform of the 30S subunit. In Cereibacter sphaeroides (strain ATCC 17025 / ATH 2.4.3) (Rhodobacter sphaeroides), this protein is Small ribosomal subunit protein uS8.